The sequence spans 285 residues: Nucleotide-binding protein Pnap_0906 (285 aa).

Position 8-15 (8-15 (GMSGSGKS)) interacts with ATP. Position 57–60 (57–60 (DVRS)) interacts with GTP.

The protein belongs to the RapZ-like family.

Displays ATPase and GTPase activities. The sequence is that of Nucleotide-binding protein Pnap_0906 from Polaromonas naphthalenivorans (strain CJ2).